The following is an 821-amino-acid chain: Protein EFR3 homolog A (821 aa).

Phosphoserine is present on residues Ser360, Ser363, Ser422, and Ser694.

The protein belongs to the EFR3 family. Component of a phosphatidylinositol 4-kinase (PI4K) complex, composed of PI4KA, EFR3 (EFR3A or EFR3B), TTC7 (TTC7A or TTC7B) and HYCC (HYCC1 or HYCC2). Post-translationally, palmitoylated at its N-terminus, anchoring the protein to the plasma membrane.

It is found in the cell membrane. The protein resides in the cytoplasm. It localises to the cytosol. In terms of biological role, component of a complex required to localize phosphatidylinositol 4-kinase (PI4K) to the plasma membrane. The complex acts as a regulator of phosphatidylinositol 4-phosphate (PtdIns(4)P) synthesis. In the complex, EFR3A probably acts as the membrane-anchoring component. Also involved in responsiveness to G-protein-coupled receptors; it is however unclear whether this role is direct or indirect. The sequence is that of Protein EFR3 homolog A from Homo sapiens (Human).